The sequence spans 247 residues: Protein lin-28 homolog B (247 aa).

The interval 1–22 is disordered; that stretch reads MAEGGASKGEEPEKLPGLAEDE. Positions 27-100 constitute a CSD domain; the sequence is HGTGHCKWFN…GLESIRVTGP (74 aa). Phosphoserine occurs at positions 94, 103, and 108. The interval 96–124 is disordered; sequence RVTGPGGSPCLGSERRPKGKTLQKRKPKG. The span at 112-123 shows a compositional bias: basic residues; sequence PKGKTLQKRKPK. 2 CCHC-type zinc fingers span residues 125–142 and 147–164; these read DRCYNCGGLDHHAKECSL and KKCHYCQSIMHMVANCPH. Zn(2+) is bound by residues C127, C130, H135, C140, C149, C152, H157, and C162. The span at 173-186 shows a compositional bias: polar residues; it reads SSQGRQEAESQPCS. The segment at 173–247 is disordered; the sequence is SSQGRQEAES…GPLIQKRKKT (75 aa). Residues 207–219 show a composition bias toward basic and acidic residues; sequence VKSEMAEHSDRSP.

The protein belongs to the lin-28 family.

It localises to the nucleus. It is found in the nucleolus. Suppressor of microRNA (miRNA) biogenesis, including that of let-7 and possibly of miR107, miR-143 and miR-200c. Binds primary let-7 transcripts (pri-let-7), including pri-let-7g and pri-let-7a-1, and sequester them in the nucleolus, away from the microprocessor complex, hence preventing their processing into mature miRNA. Does not act on pri-miR21. The repression of let-7 expression is required for normal development and contributes to maintain the pluripotent state of embryonic stem cells by preventing let-7-mediated differentiation. When overexpressed, recruits ZCCHC11/TUT4 uridylyltransferase to pre-let-7 transcripts, leading to their terminal uridylation and degradation. This activity might not be relevant in vivo, as LIN28B-mediated inhibition of let-7 miRNA maturation appears to be ZCCHC11-independent. Interaction with target pre-miRNAs occurs via an 5'-GGAG-3' motif in the pre-miRNA terminal loop. Mediates MYC-induced let-7 repression. When overexpressed, may stimulate growth of carcinoma cell lines. This Mus musculus (Mouse) protein is Protein lin-28 homolog B (Lin28b).